We begin with the raw amino-acid sequence, 291 residues long: Acetyl-coenzyme A carboxylase carboxyl transferase subunit beta (291 aa).

One can recognise a CoA carboxyltransferase N-terminal domain in the interval 23-291 (VWHKCPSCTA…PPDLPVEESV (269 aa)). Zn(2+) is bound by residues cysteine 27, cysteine 30, cysteine 46, and cysteine 49. The segment at 27-49 (CPSCTAVLYRVELERNLEVCPKC) adopts a C4-type zinc-finger fold.

The protein belongs to the AccD/PCCB family. Acetyl-CoA carboxylase is a heterohexamer composed of biotin carboxyl carrier protein (AccB), biotin carboxylase (AccC) and two subunits each of ACCase subunit alpha (AccA) and ACCase subunit beta (AccD). It depends on Zn(2+) as a cofactor.

Its subcellular location is the cytoplasm. It catalyses the reaction N(6)-carboxybiotinyl-L-lysyl-[protein] + acetyl-CoA = N(6)-biotinyl-L-lysyl-[protein] + malonyl-CoA. The protein operates within lipid metabolism; malonyl-CoA biosynthesis; malonyl-CoA from acetyl-CoA: step 1/1. Component of the acetyl coenzyme A carboxylase (ACC) complex. Biotin carboxylase (BC) catalyzes the carboxylation of biotin on its carrier protein (BCCP) and then the CO(2) group is transferred by the transcarboxylase to acetyl-CoA to form malonyl-CoA. This is Acetyl-coenzyme A carboxylase carboxyl transferase subunit beta from Coxiella burnetii (strain RSA 331 / Henzerling II).